The chain runs to 139 residues: Flagellar basal body rod protein FlgB (139 aa).

It belongs to the flagella basal body rod proteins family. The basal body constitutes a major portion of the flagellar organelle and consists of a number of rings mounted on a central rod. In Gram-negative bacteria, at least four rings, L, P, S and M are present, whereas Gram-positive bacteria lack the L and P rings. The rod consists of about 26 subunits of FlgG in the distal portion, and FlgB, FlgC and FlgF build up the proximal portion of the rod with about 6 subunits each. Rod assembly occurs by export via the flagellum-specific pathway of its constituent proteins and by their incorporation into the rod structure in the probable order of FlgB, FlgC, FlgF and FlgG. Another protein, FliE, also assembles onto the stable rod structure.

The protein resides in the bacterial flagellum basal body. Structural component of flagellum, the bacterial motility apparatus. Part of the rod structure of flagellar basal body. This is Flagellar basal body rod protein FlgB from Proteus mirabilis.